A 549-amino-acid polypeptide reads, in one-letter code: Indole-3-acetic acid-amido synthetase GH3.2 (549 aa).

This sequence belongs to the IAA-amido conjugating enzyme family. Expressed in flowers, pollen, cotyledons, stipules, true leaves, hypocotyls, and all parts of the roots except for the primary root tips.

Its function is as follows. Catalyzes the synthesis of indole-3-acetic acid (IAA)-amino acid conjugates, providing a mechanism for the plant to cope with the presence of excess auxin. Strongly reactive with Glu, Gln, Trp, Asp, Ala, Leu, Phe, Gly, Tyr, Met, Ile and Val. Little or no product formation with His, Ser, Thr, Arg, Lys, or Cys. Also active on pyruvic and butyric acid analogs of IAA, PAA and the synthetic auxin naphthaleneacetic acid (NAA). The two chlorinated synthetic auxin herbicides 2,4-D and 3,6-dichloro-o-anisic acid (dicamba) cannot be used as substrates. The polypeptide is Indole-3-acetic acid-amido synthetase GH3.2 (GH3.2) (Arabidopsis thaliana (Mouse-ear cress)).